Consider the following 136-residue polypeptide: Blasticidin-S acetyltransferase (136 aa).

Positions M1 to L136 constitute an N-acetyltransferase domain.

Confers resistance to blasticidin S antibiotic. This chain is Blasticidin-S acetyltransferase (bls), found in Streptomyces morookaense (Streptoverticillium morookaense).